A 180-amino-acid chain; its full sequence is Large ribosomal subunit protein uL5 (180 aa).

It belongs to the universal ribosomal protein uL5 family. Part of the 50S ribosomal subunit; part of the 5S rRNA/L5/L18/L25 subcomplex. Contacts the 5S rRNA and the P site tRNA. Forms a bridge to the 30S subunit in the 70S ribosome.

Functionally, this is one of the proteins that bind and probably mediate the attachment of the 5S RNA into the large ribosomal subunit, where it forms part of the central protuberance. In the 70S ribosome it contacts protein S13 of the 30S subunit (bridge B1b), connecting the 2 subunits; this bridge is implicated in subunit movement. Contacts the P site tRNA; the 5S rRNA and some of its associated proteins might help stabilize positioning of ribosome-bound tRNAs. This is Large ribosomal subunit protein uL5 from Chlamydia felis (strain Fe/C-56) (Chlamydophila felis).